The following is an 80-amino-acid chain: Phycocyanin-645 alpha-1 chain (80 aa).

Residue Arg16 coordinates (2R,3E)-phycocyanobilin. Cys18, Gln24, Tyr25, and Lys40 together coordinate mesobiliverdin. 15,16-dihydrobiliverdin-binding residues include Pro71 and Ile73.

Belongs to the phycoerythrin family. As to quaternary structure, heterotetramer of 2 different alpha chains and 2 identical beta chains which form 2 alpha-beta heterodimers within the heterotetramer. In terms of processing, contains one phycocyanobilin chromophore, one mesobiliverdin chromophore and one 15,16-dihydrobiliverdin chromophore with binding mediated by both the alpha and beta subunits.

The protein localises to the plastid. Its subcellular location is the chloroplast thylakoid membrane. Functionally, light-harvesting photosynthetic tetrapyrrole chromophore-protein from the phycobiliprotein complex. This chain is Phycocyanin-645 alpha-1 chain, found in Chroomonas sp.